The sequence spans 205 residues: uncharacterized protein (205 aa).

At 1–63 (MQRTRELESS…QHPKVAKFLK (63 aa)) the chain is on the cytoplasmic side. The helical transmembrane segment at 64–84 (VQLVFDLISLFIFATHQLLLL) threads the bilayer. Over 85-124 (EDGNFGKHYFKRKTKRCSKFSCSRCNANAHHPKWFKFKHS) the chain is Extracellular. Residues 125 to 145 (LLCLGTFCFGVYSLVKINKFF) traverse the membrane as a helical segment. At 146 to 205 (KTDQTVDLNRLLELFFWQLNAILNMKLFAFYGDHLESHSAPLDVYEDSFANKSSSGGDEV) the chain is on the cytoplasmic side.

The protein resides in the membrane. This is an uncharacterized protein from Saccharomyces cerevisiae (strain ATCC 204508 / S288c) (Baker's yeast).